The chain runs to 262 residues: Triosephosphate isomerase (262 aa).

Residue 13–15 coordinates substrate; the sequence is NWK. The active-site Electrophile is histidine 103. Residue glutamate 175 is the Proton acceptor of the active site. Substrate is bound by residues glycine 181, serine 221, and 242-243; that span reads GG.

The protein belongs to the triosephosphate isomerase family. Homodimer.

It localises to the cytoplasm. It carries out the reaction D-glyceraldehyde 3-phosphate = dihydroxyacetone phosphate. It functions in the pathway carbohydrate biosynthesis; gluconeogenesis. Its pathway is carbohydrate degradation; glycolysis; D-glyceraldehyde 3-phosphate from glycerone phosphate: step 1/1. In terms of biological role, involved in the gluconeogenesis. Catalyzes stereospecifically the conversion of dihydroxyacetone phosphate (DHAP) to D-glyceraldehyde-3-phosphate (G3P). This chain is Triosephosphate isomerase, found in Corynebacterium efficiens (strain DSM 44549 / YS-314 / AJ 12310 / JCM 11189 / NBRC 100395).